Here is a 1009-residue protein sequence, read N- to C-terminus: MSGVSEPLSRVKLGTLRRPEGPAEPMVVVPVDVEKEDVRILKVCFYSNSFNPGKNFKLVKCTVQTEIREIITSILLSGRIGPNIRLAECYGLRLKHMKSDEIHWLHPQMTVGEVQDKYECLHVEAEWRYDLQIRYLPEDFMESLKEDRTTLLYFYQQLRNDYMQRYASKVSEGMALQLGCLELRRFFKDMPHNALDKKSNFELLEKEVGLDLFFPKQMQENLKPKQFRKMIQQTFQQYASLREEECVMKFFNTLAGFANIDQETYRCELIQGWNITVDLVIGPKGIRQLTSQDAKPTCLAEFKQIRSIRCLPLEEGQAVLQLGIEGAPQALSIKTSSLAEAENMADLIDGYCRLQGEHQGSLIIHPRKDGEKRNSLPQIPMLNLEARRSHLSESCSIESDIYAEIPDETLRRPGGPQYGIAREDVVLNRILGEGFFGEVYEGVYTNHKGEKINVAVKTCKKDCTLDNKEKFMSEAVIMKNLDHPHIVKLIGIIEEEPTWIIMELYPYGELGHYLERNKNSLKVLTLVLYSLQICKAMAYLESINCVHRDIAVRNILVASPECVKLGDFGLSRYIEDEDYYKASVTRLPIKWMSPESINFRRFTTASDVWMFAVCMWEILSFGKQPFFWLENKDVIGVLEKGDRLPKPDLCPPVLYTLMTRCWDYDPSDRPRFTELVCSLSDVYQMEKDIAMEQERNARYRTPKILEPTAFQEPPPKPSRPKYRPPPQTNLLAPKLQFQVPEGLCASSPTLTSPMEYPSPVNSLHTPPLHRHNVFKRHSMREEDFIQPSSREEAQQLWEAEKVKMRQILDKQQKQMVEDYQWLRQEEKSLDPMVYMNDKSPLTPEKEVGYLEFTGPPQKPPRLGAQSIQPTANLDRTDDLVYLNVMELVRAVLELKNELCQLPPEGYVVVVKNVGLTLRKLIGSVDDLLPSLPSSSRTEIEGTQKLLNKDLAELINKMRLAQQNAVTSLSEECKRQMLTASHTLAVDAKNLLDAVDQAKVLANLAHPPAE.

The region spanning 39 to 359 (RILKVCFYSN…GYCRLQGEHQ (321 aa)) is the FERM domain. Phosphoserine is present on residues S361, S375, and S399. At Y402 the chain carries Phosphotyrosine; by autocatalysis. Residues 425–683 (VVLNRILGEG…ELVCSLSDVY (259 aa)) form the Protein kinase domain. Residues 431–439 (LGEGFFGEV), K457, and 503–509 (ELYPYGE) each bind ATP. D549 functions as the Proton acceptor in the catalytic mechanism. A Phosphotyrosine modification is found at Y579. At Y580 the chain carries Phosphotyrosine; by SRC, FYN and LCK. A disordered region spans residues 701 to 725 (TPKILEPTAFQEPPPKPSRPKYRPP). Pro residues predominate over residues 712–725 (EPPPKPSRPKYRPP). Residue Y722 is modified to Phosphotyrosine. Phosphoserine is present on S762. Residue T765 is modified to Phosphothreonine. The interval 801 to 1009 (KVKMRQILDK…LANLAHPPAE (209 aa)) is interaction with TGFB1I1. Phosphotyrosine is present on residues Y819 and Y834. S839 carries the post-translational modification Phosphoserine. The residue at position 842 (T842) is a Phosphothreonine. Phosphotyrosine is present on Y849. The residue at position 866 (S866) is a Phosphoserine. The segment at 868–1009 (QPTANLDRTD…LANLAHPPAE (142 aa)) is focal adhesion targeting (FAT). At Y881 the chain carries Phosphotyrosine; by SRC.

Belongs to the protein kinase superfamily. Tyr protein kinase family. FAK subfamily. As to quaternary structure, homodimer, or homooligomer. Interacts with SIRPA and SH2D3C. Interacts with ARHGAP10. Interacts with DLG4. Interacts with KCNA2. Interacts with NPHP1, ASAP1, ASAP2, ARHGAP26, SKAP2 and TGFB1I1. The Tyr-402 phosphorylated form interacts with SRC (via SH2 domain) and SRC family members. Forms a signaling complex with EPHA1, LCK and phosphatidylinositol 3-kinase; upon activation by EFNA1. Interacts with GRB2 (via SH2 domain). Interacts with P53/TP53 and MDM2. Interacts with MYLK. Interacts with BCAR1. Interacts with PDPK1. Interacts (hypophosphorylated) with PXN. Interacts with RB1CC1. Interacts with RHOU. Interacts with VAV1. Interacts with LPXN and PTPN12. Post-translationally, phosphorylated on tyrosine residues in response to various stimuli that elevate the intracellular calcium concentration; this activation is indirect and may be mediated by production of reactive oxygen species (ROS). Tyr-402 is the major autophosphorylation site, but other kinases can also phosphorylate Tyr-402. Autophosphorylation occurs in trans, i.e. one subunit of the dimeric receptor phosphorylates tyrosine residues on the other subunit. Phosphorylation at Tyr-402 promotes interaction with SRC and SRC family members, leading to phosphorylation at Tyr-579; Tyr-580 and Tyr-881. Phosphorylation at Tyr-881 is important for interaction with GRB2. Phosphorylated on tyrosine residues upon activation of FGR and PKC. Recruitment by NPHP1 to cell matrix adhesions initiates Tyr-402 phosphorylation. In monocytes, adherence to substrata is required for tyrosine phosphorylation and kinase activation. Angiotensin II, thapsigargin and L-alpha-lysophosphatidic acid (LPA) also induce autophosphorylation and increase kinase activity. Phosphorylation by MYLK promotes ITGB2 activation and is thus essential to trigger neutrophil transmigration during lung injury. Dephosphorylated by PTPN12. In terms of tissue distribution, most abundant in the brain, with highest levels in amygdala and hippocampus. Low levels in kidney (at protein level). Also expressed in spleen and lymphocytes.

It localises to the cytoplasm. The protein resides in the perinuclear region. It is found in the cell membrane. The protein localises to the cell junction. Its subcellular location is the focal adhesion. It localises to the cell projection. The protein resides in the lamellipodium. It is found in the cell cortex. The protein localises to the nucleus. It catalyses the reaction L-tyrosyl-[protein] + ATP = O-phospho-L-tyrosyl-[protein] + ADP + H(+). Activated in response to stimuli that lead to increased intracellular Ca(2+) levels; this activation is indirect and may be mediated by calcium-mediated production of reactive oxygen species (ROS). Activated by autophosphorylation at Tyr-402; this creates a binding site for SRC family kinases and leads to phosphorylation at additional tyrosine residues. Phosphorylation at Tyr-402, Tyr-579 and Tyr-580 is required for optimal kinase activity. Inhibited by PF-562,271, BIRB796, PF-4618433 and by PF-431396, PF-2318841 and their derivatives. Inhibited by sulfoximine-substituted trifluoromethylpyrimidines. Inhibited by 4-amino and 5-aryl substituted pyridinone compounds. Its function is as follows. Non-receptor protein-tyrosine kinase that regulates reorganization of the actin cytoskeleton, cell polarization, cell migration, adhesion, spreading and bone remodeling. Plays a role in the regulation of the humoral immune response, and is required for normal levels of marginal B-cells in the spleen and normal migration of splenic B-cells. Required for normal macrophage polarization and migration towards sites of inflammation. Regulates cytoskeleton rearrangement and cell spreading in T-cells, and contributes to the regulation of T-cell responses. Promotes osteoclastic bone resorption; this requires both PTK2B/PYK2 and SRC. May inhibit differentiation and activity of osteoprogenitor cells. Functions in signaling downstream of integrin and collagen receptors, immune receptors, G-protein coupled receptors (GPCR), cytokine, chemokine and growth factor receptors, and mediates responses to cellular stress. Forms multisubunit signaling complexes with SRC and SRC family members upon activation; this leads to the phosphorylation of additional tyrosine residues, creating binding sites for scaffold proteins, effectors and substrates. Regulates numerous signaling pathways. Promotes activation of phosphatidylinositol 3-kinase and of the AKT1 signaling cascade. Promotes activation of NOS3. Regulates production of the cellular messenger cGMP. Promotes activation of the MAP kinase signaling cascade, including activation of MAPK1/ERK2, MAPK3/ERK1 and MAPK8/JNK1. Promotes activation of Rho family GTPases, such as RHOA and RAC1. Recruits the ubiquitin ligase MDM2 to P53/TP53 in the nucleus, and thereby regulates P53/TP53 activity, P53/TP53 ubiquitination and proteasomal degradation. Acts as a scaffold, binding to both PDPK1 and SRC, thereby allowing SRC to phosphorylate PDPK1 at 'Tyr-9, 'Tyr-373', and 'Tyr-376'. Promotes phosphorylation of NMDA receptors by SRC family members, and thereby contributes to the regulation of NMDA receptor ion channel activity and intracellular Ca(2+) levels. May also regulate potassium ion transport by phosphorylation of potassium channel subunits. Phosphorylates SRC; this increases SRC kinase activity. Phosphorylates ASAP1, NPHP1, KCNA2 and SHC1. Promotes phosphorylation of ASAP2, RHOU and PXN; this requires both SRC and PTK2/PYK2. This chain is Protein-tyrosine kinase 2-beta (PTK2B), found in Homo sapiens (Human).